A 222-amino-acid polypeptide reads, in one-letter code: Germin-like protein subfamily 1 member 14 (222 aa).

The first 22 residues, 1–22 (MRFSKSLILITLSALVISFAEA), serve as a signal peptide directing secretion. The cysteines at positions 32 and 49 are disulfide-linked. The 152-residue stretch at 63 to 214 (SGLNQAGTTN…AFQLDVNVVK (152 aa)) folds into the Cupin type-1 domain. A glycan (N-linked (GlcNAc...) asparagine) is linked at N78. Residues H111, H113, E118, and H160 each coordinate Mn(2+).

This sequence belongs to the germin family. Oligomer (believed to be a pentamer but probably hexamer).

Its subcellular location is the secreted. It is found in the extracellular space. The protein localises to the apoplast. In terms of biological role, may play a role in plant defense. Probably has no oxalate oxidase activity even if the active site is conserved. This chain is Germin-like protein subfamily 1 member 14, found in Arabidopsis thaliana (Mouse-ear cress).